The chain runs to 306 residues: Probable histidinol-phosphatase (306 aa).

The protein belongs to the PHP hydrolase family. HisK subfamily.

The catalysed reaction is L-histidinol phosphate + H2O = L-histidinol + phosphate. The protein operates within amino-acid biosynthesis; L-histidine biosynthesis; L-histidine from 5-phospho-alpha-D-ribose 1-diphosphate: step 8/9. The sequence is that of Probable histidinol-phosphatase from Schizosaccharomyces pombe (strain 972 / ATCC 24843) (Fission yeast).